A 154-amino-acid polypeptide reads, in one-letter code: Protein X (154 aa).

The interval Pro-68–Phe-117 is mitochondrial targeting sequence.

This sequence belongs to the orthohepadnavirus protein X family. May form homodimer. May interact with host CEBPA, CFLAR, CREB1, DDB1, E4F1, HBXIP, HSPD1/HSP60, NFKBIA, POLR2E and SMAD4. Interacts with host SMC5-SMC6 complex and induces its degradation. Interacts with host TRPC4AP; leading to prevent ubiquitination of TRPC4AP. Interacts with host PLSCR1; this interaction promotes ubiquitination and degradation of HBx and impairs HBx-mediated cell proliferation. A fraction may be phosphorylated in insect cells and HepG2 cells, a human hepatoblastoma cell line. Phosphorylated in vitro by host protein kinase C or mitogen-activated protein kinase. N-acetylated in insect cells.

It is found in the host cytoplasm. Its subcellular location is the host nucleus. The protein localises to the host mitochondrion. Multifunctional protein that plays a role in silencing host antiviral defenses and promoting viral transcription. Does not seem to be essential for HBV infection. May be directly involved in development of cirrhosis and liver cancer (hepatocellular carcinoma). Most of cytosolic activities involve modulation of cytosolic calcium. The effect on apoptosis is controversial depending on the cell types in which the studies have been conducted. May induce apoptosis by localizing in mitochondria and causing loss of mitochondrial membrane potential. May also modulate apoptosis by binding host CFLAR, a key regulator of the death-inducing signaling complex (DISC). Promotes viral transcription by using the host E3 ubiquitin ligase DDB1 to target the SMC5-SMC6 complex to proteasomal degradation. This host complex would otherwise bind to viral episomal DNA, and prevents its transcription. Moderately stimulates transcription of many different viral and cellular transcription elements. Promoters and enhancers stimulated by HBx contain DNA binding sites for NF-kappa-B, AP-1, AP-2, c-EBP, ATF/CREB, or the calcium-activated factor NF-AT. In Hepatitis B virus genotype B2 (isolate Vietnam/9873/1997) (HBV-B), this protein is Protein X.